The primary structure comprises 581 residues: Putative phospholipase B-like 3 (581 aa).

The signal sequence occupies residues 1 to 16 (MKLLFFLFGLIFAVEQ). Asn50, Asn82, Asn132, Asn169, Asn215, Asn309, Asn543, Asn546, and Asn560 each carry an N-linked (GlcNAc...) asparagine glycan.

Belongs to the phospholipase B-like family.

It is found in the secreted. In terms of biological role, putative phospholipase. The chain is Putative phospholipase B-like 3 from Caenorhabditis elegans.